Here is a 724-residue protein sequence, read N- to C-terminus: Propionyl-CoA carboxylase alpha chain, mitochondrial (724 aa).

In terms of domain architecture, Biotin carboxylation spans 48–495 (KFDKILIANR…TTKYLPEVYP (448 aa)). Residues Lys163, 195–256 (SRDI…PRHI), Glu247, and Asn282 each bind ATP. Positions 167–364 (KKIATAARVS…IVQQMLRVSY (198 aa)) constitute an ATP-grasp domain. Mg(2+)-binding residues include Glu322, Glu335, and Asn337. Positions 322, 335, and 337 each coordinate Mn(2+). Arg339 is a catalytic residue. A biotin-binding site is contributed by Phe395. Residues 649 to 724 (KAKVDLSTVV…DEGEVLVELE (76 aa)) enclose the Biotinyl-binding domain. Lys690 carries the post-translational modification N6-biotinyllysine.

As to quaternary structure, the holoenzyme is a dodecamer composed of 6 alpha subunits and 6 beta subunits. Interacts with sir-2.2 and sir-2.3. Requires biotin as cofactor. Mg(2+) is required as a cofactor. The cofactor is Mn(2+). Post-translationally, the biotin cofactor is covalently attached to the C-terminal biotinyl-binding domain and is required for the catalytic activity.

It is found in the mitochondrion matrix. The enzyme catalyses propanoyl-CoA + hydrogencarbonate + ATP = (S)-methylmalonyl-CoA + ADP + phosphate + H(+). The catalysed reaction is butanoyl-CoA + hydrogencarbonate + ATP = (2S)-ethylmalonyl-CoA + ADP + phosphate + H(+). It participates in metabolic intermediate metabolism; propanoyl-CoA degradation; succinyl-CoA from propanoyl-CoA: step 1/3. In terms of biological role, this is one of the 2 subunits of the biotin-dependent propionyl-CoA carboxylase (PCC), a mitochondrial enzyme involved in the catabolism of odd chain fatty acids, branched-chain amino acids isoleucine, threonine, methionine, and valine and other metabolites. Propionyl-CoA carboxylase catalyzes the carboxylation of propionyl-CoA/propanoyl-CoA to D-methylmalonyl-CoA/(S)-methylmalonyl-CoA. Within the holoenzyme, the alpha subunit catalyzes the ATP-dependent carboxylation of the biotin carried by the biotin carboxyl carrier (BCC) domain, while the beta subunit then transfers the carboxyl group from carboxylated biotin to propionyl-CoA. Propionyl-CoA carboxylase also significantly acts on butyryl-CoA/butanoyl-CoA, which is converted to ethylmalonyl-CoA/(2S)-ethylmalonyl-CoA. Other alternative minor substrates include (2E)-butenoyl-CoA/crotonoyl-CoA. This Caenorhabditis elegans protein is Propionyl-CoA carboxylase alpha chain, mitochondrial (pcca-1).